Here is a 589-residue protein sequence, read N- to C-terminus: uncharacterized protein (589 aa).

The next 5 helical transmembrane spans lie at 11-31 (LNWI…TMLA), 57-77 (LILM…FSVL), 97-117 (FWFF…HAIA), 190-210 (IEFT…GFNI), and 213-233 (GVVF…VWIG). Residues 57 to 357 (LILMLLVLFI…FRLFYEQFTL (301 aa)) form the ABC transmembrane type-1 domain. An ABC transporter domain is found at 390 to 587 (VALKNFGIKD…QLKLDVCLLC (198 aa)). 423-430 (GASGTGKT) lines the ATP pocket.

This sequence belongs to the ABC transporter superfamily.

The protein localises to the cell inner membrane. This is an uncharacterized protein from Haemophilus influenzae (strain ATCC 51907 / DSM 11121 / KW20 / Rd).